The sequence spans 1070 residues: DNA-directed RNA polymerase subunit beta (1070 aa).

It belongs to the RNA polymerase beta chain family. As to quaternary structure, in plastids the minimal PEP RNA polymerase catalytic core is composed of four subunits: alpha, beta, beta', and beta''. When a (nuclear-encoded) sigma factor is associated with the core the holoenzyme is formed, which can initiate transcription.

It localises to the plastid. Its subcellular location is the chloroplast. It carries out the reaction RNA(n) + a ribonucleoside 5'-triphosphate = RNA(n+1) + diphosphate. Functionally, DNA-dependent RNA polymerase catalyzes the transcription of DNA into RNA using the four ribonucleoside triphosphates as substrates. In Chloranthus spicatus (Chulantree), this protein is DNA-directed RNA polymerase subunit beta.